A 271-amino-acid chain; its full sequence is Ferric vulnibactin reductase VuuB (271 aa).

Residues 8-131 form the FAD-binding FR-type domain; the sequence is VYPMLLDFVR…IGPAGPDPLI (124 aa).

This sequence belongs to the SIP oxidoreductase family. In terms of assembly, monomer. The cofactor is FAD.

It is found in the cytoplasm. It catalyses the reaction 2 a Fe(II)-siderophore + NAD(+) + H(+) = 2 a Fe(III)-siderophore + NADH. Its function is as follows. Ferric-siderophore reductase involved in iron removal from the siderophores after their transport into the cell. Acts as a major ferric-vulnibactin reductase catalyzing the reduction of Fe(3+)-vulnibactin, a catecholate siderophore synthesized by V.vulnificus. Catalyzes reduction of Fe(3+)-aerobactin, a citrate-hydroxamate siderophore produced by other bacteria, in the absence of IutB. Catalyzes reduction of Fe(3+)-vibriobactin in vitro. No activity with ferrioxamine B or Fe(3+)-enterobactin. Catalyzes reduction of ferric chelating compounds Fe(3+)-nitrilotriacetic acid (NTA), Fe(3+)-citrate and Fe(3+)-EDTA as well as non-complexed FeCl3 in the presence of NADH as its electron donor and FAD as its cofactor in vitro. Highest activity with Fe(3+)-NTA as electron acceptor. The protein is Ferric vulnibactin reductase VuuB of Vibrio vulnificus.